Here is a 116-residue protein sequence, read N- to C-terminus: Peptidyl-tRNA hydrolase (116 aa).

It belongs to the PTH2 family.

Its subcellular location is the cytoplasm. It catalyses the reaction an N-acyl-L-alpha-aminoacyl-tRNA + H2O = an N-acyl-L-amino acid + a tRNA + H(+). Its function is as follows. The natural substrate for this enzyme may be peptidyl-tRNAs which drop off the ribosome during protein synthesis. The polypeptide is Peptidyl-tRNA hydrolase (Methanopyrus kandleri (strain AV19 / DSM 6324 / JCM 9639 / NBRC 100938)).